The following is a 788-amino-acid chain: E3 ubiquitin-protein ligase SspH2 (788 aa).

Residues 1–481 form an interaction with host membrane and with target proteins region; the sequence is MPFHIGSGCL…PGYSGPIIRF (481 aa). LRR repeat units follow at residues 223 to 242, 243 to 264, 265 to 282, 283 to 302, 303 to 324, 325 to 342, 343 to 364, 365 to 382, 383 to 404, 405 to 422, 423 to 445, and 446 to 466; these read HITT…ALPP, ELRT…PPGL, LELS…ALPS, GLCK…VLPP, GLQE…PSEL, CKLW…MLPS, YKLW…ALPS, GLKE…PSEL, KELM…MLPS, GLLS…IHLS, and SETT…QALR. Positions 482-491 are linker; sequence DMAGASAPRE. The tract at residues 492–788 is E3 ubiquitin-protein ligase catalytic domain; it reads TRALHLAAAD…SYLNVQWRRN (297 aa). In terms of domain architecture, NEL spans 494–788; it reads ALHLAAADWL…SYLNVQWRRN (295 aa). The active-site Glycyl thioester intermediate is the Cys-580.

The protein belongs to the LRR-containing bacterial E3 ligase family. In terms of processing, ubiquitinated in the presence of host E1 ubiquitin-activating enzyme UBA1, E2 ubiquitin-conjugating enzyme UBE2D2 and ubiquitin.

It is found in the secreted. The protein resides in the host cytoplasm. The protein localises to the host apical cell membrane. It catalyses the reaction S-ubiquitinyl-[E2 ubiquitin-conjugating enzyme]-L-cysteine + [acceptor protein]-L-lysine = [E2 ubiquitin-conjugating enzyme]-L-cysteine + N(6)-ubiquitinyl-[acceptor protein]-L-lysine.. Exists in an autoinhibited state in the absence of substrate protein, due to interactions of the leucine-rich repeat domain with the catalytic domain. Is activated upon binding to a substrate protein. Functionally, effector proteins function to alter host cell physiology and promote bacterial survival in host tissues. This protein is an E3 ubiquitin ligase that interferes with host's ubiquitination pathway. The polypeptide is E3 ubiquitin-protein ligase SspH2 (sspH2) (Salmonella typhimurium (strain LT2 / SGSC1412 / ATCC 700720)).